The chain runs to 37 residues: Large ribosomal subunit protein bL36c (37 aa).

Belongs to the bacterial ribosomal protein bL36 family.

The protein localises to the plastid. The sequence is that of Large ribosomal subunit protein bL36c from Aneura mirabilis (Parasitic liverwort).